Reading from the N-terminus, the 436-residue chain is GTPase Der (436 aa).

EngA-type G domains are found at residues Pro-4–Glu-167 and Ile-175–Asn-351. GTP is bound by residues Gly-10–Ser-17, Asp-57–Ile-61, Asn-119–Asp-122, Gly-181–Ser-188, Asp-229–Met-233, and Asn-294–Asp-297. The KH-like domain maps to Lys-352 to Lys-436.

Belongs to the TRAFAC class TrmE-Era-EngA-EngB-Septin-like GTPase superfamily. EngA (Der) GTPase family. As to quaternary structure, associates with the 50S ribosomal subunit.

Its function is as follows. GTPase that plays an essential role in the late steps of ribosome biogenesis. In Streptococcus pyogenes serotype M2 (strain MGAS10270), this protein is GTPase Der.